We begin with the raw amino-acid sequence, 138 residues long: Holo-[acyl-carrier-protein] synthase (138 aa).

Positions 8 and 56 each coordinate Mg(2+).

This sequence belongs to the P-Pant transferase superfamily. AcpS family. Mg(2+) is required as a cofactor.

It is found in the cytoplasm. The enzyme catalyses apo-[ACP] + CoA = holo-[ACP] + adenosine 3',5'-bisphosphate + H(+). Its function is as follows. Transfers the 4'-phosphopantetheine moiety from coenzyme A to a Ser of acyl-carrier-protein. The protein is Holo-[acyl-carrier-protein] synthase of Clostridium novyi (strain NT).